The chain runs to 1018 residues: Cell wall protein 1 (1018 aa).

A signal peptide spans 1-17 (MLPSIVISIVLASFVSA). Residues 32-143 (NPYTIYPSVA…SSLSAAATAV (112 aa)) enclose the CFEM 1 domain. Disulfide bonds link Cys-60–Cys-100, Cys-64–Cys-95, Cys-74–Cys-81, and Cys-83–Cys-116. Asp-78 provides a ligand contact to heme. The disordered stretch occupies residues 147–227 (SEQPVETSSE…STPEDNPYTI (81 aa)). The segment covering 148–164 (EQPVETSSEPAGSSQSV) has biased composition (polar residues). Positions 165–221 (ESSQPAETSSSEPAETSSSEPAETSSETSSEQPASSEPAETSSEESSTITSAPSTPE) are enriched in low complexity. CFEM domains follow at residues 223–334 (NPYT…ATAV) and 393–504 (SSSS…ATAV). Intrachain disulfides connect Cys-251–Cys-291, Cys-255–Cys-286, Cys-265–Cys-272, and Cys-274–Cys-307. A heme-binding site is contributed by Asp-269. The interval 338–396 (SEQSVETSSESAESSQSVESSQPAETSSEQPSETSSETSSQQLSSITSAPDSSATSSSS) is disordered. Intrachain disulfides connect Cys-421–Cys-461, Cys-425–Cys-456, Cys-435–Cys-442, and Cys-444–Cys-477. Asp-439 contributes to the heme binding site. The tract at residues 507-557 (SDSASETASQEPSETSSEQPSETASQQPAETSSEESSTITSAPSTPEDNPY) is disordered. The span at 509 to 553 (SASETASQEPSETSSEQPSETASQQPAETSSEESSTITSAPSTPE) shows a compositional bias: low complexity. In terms of domain architecture, CFEM 4 spans 555-666 (NPYTIYPSVA…SSLNAAATAV (112 aa)). 4 disulfide bridges follow: Cys-583–Cys-623, Cys-587–Cys-618, Cys-597–Cys-604, and Cys-606–Cys-639. Asp-601 contacts heme. A disordered region spans residues 677–785 (SASESASQVP…STSTKSDAAS (109 aa)). Residues 690–766 (SAASSQSANN…AISESVAPSS (77 aa)) are compositionally biased toward low complexity. 9 N-linked (GlcNAc...) asparagine glycosylation sites follow: Asn-698, Asn-708, Asn-718, Asn-729, Asn-743, Asn-753, Asn-769, Asn-798, and Asn-965. A compositionally biased stretch (polar residues) spans 767 to 785 (YGNSTIAQPSTSTKSDAAS). Residue Ser-989 is the site of GPI-anchor amidated serine attachment. Residues 990–1018 (VAIANMANTKFASTMSLLVASFVFVGLFI) constitute a propeptide, removed in mature form.

It belongs to the RBT5 family. The GPI-anchor is attached to the protein in the endoplasmic reticulum and serves to target the protein to the cell surface. There, the glucosamine-inositol phospholipid moiety is cleaved off and the GPI-modified mannoprotein is covalently attached via its lipidless GPI glycan remnant to the 1,6-beta-glucan of the outer cell wall layer.

It localises to the secreted. The protein resides in the cell wall. Its subcellular location is the membrane. In terms of biological role, heme-binding protein involved in heme-iron utilization. The ability to acquire iron from host tissues is a major virulence factor of pathogenic microorganisms. Required for biofilm formation. The polypeptide is Cell wall protein 1 (CSA1) (Candida albicans (strain SC5314 / ATCC MYA-2876) (Yeast)).